The sequence spans 275 residues: Probable aquaporin NIP7-1 (275 aa).

Over residues Met-1–Asp-11 the composition is skewed to basic and acidic residues. Residues Met-1–His-26 are disordered. The next 2 membrane-spanning stretches (helical) occupy residues Ile-47–Ser-67 and Val-76–Ile-96. Residues Asn-105–Ser-107 carry the NPA 1 motif. The next 3 helical transmembrane spans lie at Ile-127–Val-147, Val-161–Leu-181, and Leu-192–Ser-212. The NPA 2 motif lies at Asn-217–Ala-219. A helical membrane pass occupies residues Phe-231–Thr-251. At Ser-272 the chain carries Phosphoserine.

The protein belongs to the MIP/aquaporin (TC 1.A.8) family. NIP (TC 1.A.8.12) subfamily. As to expression, expressed in floral buds.

Its subcellular location is the membrane. Aquaporins facilitate the transport of water and small neutral solutes across cell membranes. This chain is Probable aquaporin NIP7-1 (NIP7-1), found in Arabidopsis thaliana (Mouse-ear cress).